The primary structure comprises 204 residues: Flavin-dependent thymidylate synthase (204 aa).

Residues 1 to 204 (MTVTLMQHTS…RYLFCLNQEG (204 aa)) enclose the ThyX domain. FAD contacts are provided by residues Ser-50 and 74-76 (RHR). Residues 71-74 (ELAR), 84-86 (SSR), and Lys-143 each bind dUMP. The short motif at 74-84 (RHRIASLSVKS) is the ThyX motif element. FAD is bound by residues 159 to 161 (NAR) and Asn-165. Arg-170 serves as a coordination point for dUMP. Arg-170 functions as the Involved in ionization of N3 of dUMP, leading to its activation in the catalytic mechanism.

Belongs to the thymidylate synthase ThyX family. As to quaternary structure, homotetramer. The cofactor is FAD.

It catalyses the reaction dUMP + (6R)-5,10-methylene-5,6,7,8-tetrahydrofolate + NADPH + H(+) = dTMP + (6S)-5,6,7,8-tetrahydrofolate + NADP(+). The protein operates within pyrimidine metabolism; dTTP biosynthesis. Its function is as follows. Catalyzes the reductive methylation of 2'-deoxyuridine-5'-monophosphate (dUMP) to 2'-deoxythymidine-5'-monophosphate (dTMP) while utilizing 5,10-methylenetetrahydrofolate (mTHF) as the methyl donor, and NADPH and FADH(2) as the reductant. The protein is Flavin-dependent thymidylate synthase of Wolinella succinogenes (strain ATCC 29543 / DSM 1740 / CCUG 13145 / JCM 31913 / LMG 7466 / NCTC 11488 / FDC 602W) (Vibrio succinogenes).